We begin with the raw amino-acid sequence, 883 residues long: Alanine--tRNA ligase (883 aa).

4 residues coordinate Zn(2+): H563, H567, C673, and H677.

Belongs to the class-II aminoacyl-tRNA synthetase family. The cofactor is Zn(2+).

It is found in the cytoplasm. It catalyses the reaction tRNA(Ala) + L-alanine + ATP = L-alanyl-tRNA(Ala) + AMP + diphosphate. Catalyzes the attachment of alanine to tRNA(Ala) in a two-step reaction: alanine is first activated by ATP to form Ala-AMP and then transferred to the acceptor end of tRNA(Ala). Also edits incorrectly charged Ser-tRNA(Ala) and Gly-tRNA(Ala) via its editing domain. The polypeptide is Alanine--tRNA ligase (Caulobacter sp. (strain K31)).